We begin with the raw amino-acid sequence, 706 residues long: Histone deacetylase HDA1 (706 aa).

The span at 1–24 shows a compositional bias: basic and acidic residues; that stretch reads MDSVMVKKEVLENPDHDLKRKLEE. Residues 1 to 36 form a disordered region; sequence MDSVMVKKEVLENPDHDLKRKLEENKEEENSLSTTS. The interval 67–396 is histone deacetylase; the sequence is RYHAKIFTSY…ALSVAKVLIG (330 aa). Histidine 206 is an active-site residue.

Belongs to the histone deacetylase family. HD type 2 subfamily.

The protein resides in the nucleus. The catalysed reaction is N(6)-acetyl-L-lysyl-[histone] + H2O = L-lysyl-[histone] + acetate. Its function is as follows. Responsible for the deacetylation of lysine residues on the N-terminal part of the core histones (H2A, H2B, H3 and H4). Histone deacetylation gives a tag for epigenetic repression and plays an important role in transcriptional regulation, cell cycle progression and developmental events. Histone deacetylases act via the formation of large multiprotein complexes. The sequence is that of Histone deacetylase HDA1 (HDA1) from Saccharomyces cerevisiae (strain ATCC 204508 / S288c) (Baker's yeast).